A 167-amino-acid polypeptide reads, in one-letter code: Ubiquitin-conjugating enzyme E2 14 (167 aa).

An N-acetylalanine modification is found at alanine 2. A UBC core domain is found at glutamine 5–glutamate 165. Cysteine 90 acts as the Glycyl thioester intermediate in catalysis.

Belongs to the ubiquitin-conjugating enzyme family.

It catalyses the reaction S-ubiquitinyl-[E1 ubiquitin-activating enzyme]-L-cysteine + [E2 ubiquitin-conjugating enzyme]-L-cysteine = [E1 ubiquitin-activating enzyme]-L-cysteine + S-ubiquitinyl-[E2 ubiquitin-conjugating enzyme]-L-cysteine.. It participates in protein modification; protein ubiquitination. Functionally, accepts the ubiquitin from the E1 complex and catalyzes its covalent attachment to other proteins. Involved in the formation of multiubiquitin chains. Signal the protein for selective degradation. This is Ubiquitin-conjugating enzyme E2 14 (UBC14) from Arabidopsis thaliana (Mouse-ear cress).